We begin with the raw amino-acid sequence, 391 residues long: Phosphoglycerate kinase (391 aa).

Substrate contacts are provided by residues 21–23, Arg36, 59–62, Arg113, and Arg146; these read DLN and HLGR. ATP contacts are provided by residues Lys197, Glu319, and 345–348; that span reads GGDT.

It belongs to the phosphoglycerate kinase family. Monomer.

It localises to the cytoplasm. It carries out the reaction (2R)-3-phosphoglycerate + ATP = (2R)-3-phospho-glyceroyl phosphate + ADP. The protein operates within carbohydrate degradation; glycolysis; pyruvate from D-glyceraldehyde 3-phosphate: step 2/5. The protein is Phosphoglycerate kinase of Xanthomonas euvesicatoria pv. vesicatoria (strain 85-10) (Xanthomonas campestris pv. vesicatoria).